We begin with the raw amino-acid sequence, 1079 residues long: Psi-producing oxygenase A (1079 aa).

The tract at residues 105–446 is linoleate 8R-lipoxygenase; sequence TNTFLTTLWN…DGSYDDNDLV (342 aa). Position 202 (H202) interacts with heme b. Y374 is a catalytic residue. A heme b-binding site is contributed by H377. A 9,12-octadecadienoate 8-hydroperoxide 8R-isomerase region spans residues 654–1079; sequence QFINSHSACM…WDGDLPEVKE (426 aa).

The protein belongs to the peroxidase family. Homotetramer. Heme b serves as cofactor.

The catalysed reaction is (9Z,12Z)-octadecadienoate + O2 = (8R,9Z,12Z)-8-hydroperoxyoctadeca-9,12-dienoate. The enzyme catalyses (8R,9Z,12Z)-8-hydroperoxyoctadeca-9,12-dienoate = (5S,8R,9Z,12Z)-5,8-dihydroxyoctadeca-9,12-dienoate. Its function is as follows. Bifunctional heme-containing enzyme that oxidizes linoleic acid to (8R,9Z,12Z)-8-hydroperoxyoctadeca-9,12-dienoate (within the N-terminal heme peroxidase domain), which is subsequently isomerized to (5S,8R,9Z,12Z)-5,8-dihydroxyoctadeca-9,12-dienoate (within the C-terminal P450 heme thiolate domain). Oxidized unsaturated fatty acids, so-called oxylipins, derived from endogenous fatty acids, influence the development of the asexual conidiophores and sexual cleistothecia and regulate the secondary metabolism. These substances were collectively named psi factors and are primarily a mixture of hydroxylated oleic, linoleic and alpha-linolenic acids. They are termed psi-beta, psi-alpha, and psi-gamma, respectively. Oxylipins may also serve as activators of mammalian immune responses contributing to enhanced resistance to opportunistic fungi and as factors that modulate fungal development contributing to resistance to host defenses. The chain is Psi-producing oxygenase A (ppoA) from Aspergillus fumigatus (strain CBS 144.89 / FGSC A1163 / CEA10) (Neosartorya fumigata).